Here is a 645-residue protein sequence, read N- to C-terminus: L-aspartate oxidase, chloroplastic (645 aa).

Residues 1–70 (MAALMNGFGS…RMRHKVGSIR (70 aa)) constitute a chloroplast transit peptide. Residues 92 to 95 (SGVA), lysine 114, 121 to 128 (NTNYAQGG), and aspartate 292 contribute to the FAD site. Arginine 368 functions as the Proton donor/acceptor in the catalytic mechanism. FAD-binding positions include glutamate 453 and 469–470 (SL).

It belongs to the FAD-dependent oxidoreductase 2 family. NadB subfamily. Requires FAD as cofactor.

It localises to the plastid. The protein resides in the chloroplast. It catalyses the reaction L-aspartate + O2 = iminosuccinate + H2O2. It participates in cofactor biosynthesis; NAD(+) biosynthesis; iminoaspartate from L-aspartate (oxidase route): step 1/1. In terms of biological role, catalyzes the oxidation of L-aspartate to iminoaspartate. The sequence is that of L-aspartate oxidase, chloroplastic from Oryza sativa subsp. japonica (Rice).